Here is a 560-residue protein sequence, read N- to C-terminus: Choline/ethanolamine transporter FLVCR1 (560 aa).

The tract at residues 1 to 43 is disordered; sequence MARPDDEVGPAVAPGHPLGKGYLPVPKGAPDGEARLVPQNGPE. Residues 1 to 92 lie on the Cytoplasmic side of the membrane; the sequence is MARPDDEVGP…EDVPCPACPP (92 aa). The chain crosses the membrane as a helical span at residues 93–117; that stretch reads RTALSPRRFVVLLIFSLYSLVNAFQ. Over 118–135 the chain is Extracellular; the sequence is WIQYSSISNVFEDFYEVS. The chain crosses the membrane as a helical span at residues 136 to 163; it reads PLHINWLSMVYMVAYVPLIFPATWLLDT. Residues 164-165 are Cytoplasmic-facing; that stretch reads RG. Residues 166 to 185 form a helical membrane-spanning segment; the sequence is LRLTALLGSGLNCLGAWVKC. The Extracellular portion of the chain corresponds to 186–192; it reads GSVQRHL. The helical transmembrane segment at 193–221 threads the bilayer; sequence FWVTMLGQILCSVAQVFILGLPSPVASVW. Residue glutamine 207 participates in ethanolamine binding. Residues 222–226 are Cytoplasmic-facing; sequence FGPKE. The helical transmembrane segment at 227 to 252 threads the bilayer; that stretch reads VSTACATAVLGNQLGTAVGFLLPPVL. Topologically, residues 253–270 are extracellular; sequence VPALGTQNNTGLLAHTQN. Residue asparagine 270 is glycosylated (N-linked (GlcNAc...) asparagine). Residues 271-300 traverse the membrane as a helical segment; it reads NTDLLAHNINTMFYGTAFISTFLFFLTVIA. The Cytoplasmic segment spans residues 301 to 336; the sequence is FKEKPPLPPSQAQAILRDSPPEEYSYKSSIWNLCRN. The chain crosses the membrane as a helical span at residues 337–367; it reads IPFVLLLVSYGIMTGAFYSISTLLNQIILTY. Residues 368 to 371 lie on the Extracellular side of the membrane; the sequence is YVGE. The helical transmembrane segment at 372–400 threads the bilayer; that stretch reads EVNAGRIGLTLVVAGMVGSILCGLWLDYT. The Cytoplasmic portion of the chain corresponds to 401–402; it reads KT. A helical transmembrane segment spans residues 403–425; it reads YKQTTLIVYVLSFIGMLIFTFTL. Over 426 to 428 the chain is Extracellular; sequence NLG. Residues 429–458 traverse the membrane as a helical segment; it reads YIVALFFTGGILGFFMTGYLPLGFEFAVEI. Residues 459–466 are Cytoplasmic-facing; sequence TYPESEGM. A helical membrane pass occupies residues 467 to 492; that stretch reads SSGLLNTAAQILGIFFTLAQGKITTD. An ethanolamine-binding site is contributed by glutamine 476. Glutamine 476 contacts choline. Over 493-495 the chain is Extracellular; it reads YNS. Residues 496-518 traverse the membrane as a helical segment; that stretch reads PEAGNIFLCAWMFVGIILTALIK. The Cytoplasmic segment spans residues 519-560; that stretch reads SDLRRHNINTGLTNIDVKAVPVDSRVDPKPKAMVSIQSESSL. Position 542 is a phosphoserine (serine 542).

The protein belongs to the major facilitator superfamily. Feline leukemia virus subgroup C receptor (TC 2.A.1.28.1) family.

The protein localises to the cell membrane. The catalysed reaction is choline(out) = choline(in). It catalyses the reaction ethanolamine(in) = ethanolamine(out). The enzyme catalyses heme b(in) = heme b(out). Uniporter that mediates the transport of extracellular choline and ethanolamine into cells, thereby playing a key role in phospholipid biosynthesis. Choline and ethanolamine are the precursors of phosphatidylcholine and phosphatidylethanolamine, respectively, the two most abundant phospholipids. Transport is not coupled with proton transport and is exclusively driven by the choline (or ethanolamine) gradient across the plasma membrane. Also acts as a heme b transporter that mediates heme efflux from the cytoplasm to the extracellular compartment. In Mus terricolor (Earth-colored mouse), this protein is Choline/ethanolamine transporter FLVCR1 (Flvcr1).